An 80-amino-acid chain; its full sequence is Acyl carrier protein (80 aa).

One can recognise a Carrier domain in the interval 4 to 79 (ANVEQKVKNI…DAVNYITTHK (76 aa)). Serine 39 is modified (O-(pantetheine 4'-phosphoryl)serine).

This sequence belongs to the acyl carrier protein (ACP) family. In terms of processing, 4'-phosphopantetheine is transferred from CoA to a specific serine of apo-ACP by AcpS. This modification is essential for activity because fatty acids are bound in thioester linkage to the sulfhydryl of the prosthetic group.

It is found in the cytoplasm. It participates in lipid metabolism; fatty acid biosynthesis. Functionally, carrier of the growing fatty acid chain in fatty acid biosynthesis. This chain is Acyl carrier protein, found in Anaeromyxobacter sp. (strain Fw109-5).